The primary structure comprises 142 residues: Large ribosomal subunit protein uL11 (142 aa).

Belongs to the universal ribosomal protein uL11 family. As to quaternary structure, part of the ribosomal stalk of the 50S ribosomal subunit. Interacts with L10 and the large rRNA to form the base of the stalk. L10 forms an elongated spine to which L12 dimers bind in a sequential fashion forming a multimeric L10(L12)X complex. Post-translationally, one or more lysine residues are methylated.

Functionally, forms part of the ribosomal stalk which helps the ribosome interact with GTP-bound translation factors. The sequence is that of Large ribosomal subunit protein uL11 from Xylella fastidiosa (strain 9a5c).